Here is a 408-residue protein sequence, read N- to C-terminus: Acetate kinase (408 aa).

Mg(2+) is bound at residue N7. Residue K14 participates in ATP binding. Position 91 (R91) interacts with substrate. D148 (proton donor/acceptor) is an active-site residue. Residues 208-212 (HLGNG), 283-285 (DFR), and 331-335 (GIGEN) contribute to the ATP site. Residue E384 coordinates Mg(2+).

The protein belongs to the acetokinase family. In terms of assembly, homodimer. The cofactor is Mg(2+). It depends on Mn(2+) as a cofactor.

Its subcellular location is the cytoplasm. It catalyses the reaction acetate + ATP = acetyl phosphate + ADP. It participates in metabolic intermediate biosynthesis; acetyl-CoA biosynthesis; acetyl-CoA from acetate: step 1/2. Functionally, catalyzes the formation of acetyl phosphate from acetate and ATP. Can also catalyze the reverse reaction. In Methanosarcina mazei (strain ATCC BAA-159 / DSM 3647 / Goe1 / Go1 / JCM 11833 / OCM 88) (Methanosarcina frisia), this protein is Acetate kinase.